We begin with the raw amino-acid sequence, 564 residues long: Dihydroxy-acid dehydratase (564 aa).

[2Fe-2S] cluster is bound at residue Cys53. Asp85 contributes to the Mg(2+) binding site. Cys126 is a [2Fe-2S] cluster binding site. Residues Asp127 and Lys128 each contribute to the Mg(2+) site. Lys128 is modified (N6-carboxylysine). Cys203 is a [2Fe-2S] cluster binding site. Residue Glu454 participates in Mg(2+) binding. Ser480 (proton acceptor) is an active-site residue.

This sequence belongs to the IlvD/Edd family. In terms of assembly, homodimer. The cofactor is [2Fe-2S] cluster. Mg(2+) serves as cofactor.

The enzyme catalyses (2R)-2,3-dihydroxy-3-methylbutanoate = 3-methyl-2-oxobutanoate + H2O. It catalyses the reaction (2R,3R)-2,3-dihydroxy-3-methylpentanoate = (S)-3-methyl-2-oxopentanoate + H2O. It functions in the pathway amino-acid biosynthesis; L-isoleucine biosynthesis; L-isoleucine from 2-oxobutanoate: step 3/4. Its pathway is amino-acid biosynthesis; L-valine biosynthesis; L-valine from pyruvate: step 3/4. Functionally, functions in the biosynthesis of branched-chain amino acids. Catalyzes the dehydration of (2R,3R)-2,3-dihydroxy-3-methylpentanoate (2,3-dihydroxy-3-methylvalerate) into 2-oxo-3-methylpentanoate (2-oxo-3-methylvalerate) and of (2R)-2,3-dihydroxy-3-methylbutanoate (2,3-dihydroxyisovalerate) into 2-oxo-3-methylbutanoate (2-oxoisovalerate), the penultimate precursor to L-isoleucine and L-valine, respectively. In Leifsonia xyli subsp. xyli (strain CTCB07), this protein is Dihydroxy-acid dehydratase.